The following is a 213-amino-acid chain: Large ribosomal subunit protein uL3 (213 aa).

Q151 carries the N5-methylglutamine modification.

The protein belongs to the universal ribosomal protein uL3 family. Part of the 50S ribosomal subunit. Forms a cluster with proteins L14 and L19. Methylated by PrmB.

Its function is as follows. One of the primary rRNA binding proteins, it binds directly near the 3'-end of the 23S rRNA, where it nucleates assembly of the 50S subunit. This chain is Large ribosomal subunit protein uL3, found in Rhizobium leguminosarum bv. trifolii (strain WSM2304).